We begin with the raw amino-acid sequence, 134 residues long: Acyl carrier protein, chloroplastic (134 aa).

Residues 1-51 constitute a chloroplast transit peptide; it reads MSTTFCSSVSMQATSLAATTRISFQKPALVSRTNLSFNLSRSIPTRLSVSC. The Carrier domain occupies 55-130; it reads PETVEKVSKI…EAAELIDELV (76 aa). Position 90 is an O-(pantetheine 4'-phosphoryl)serine (S90).

This sequence belongs to the acyl carrier protein (ACP) family. 4'-phosphopantetheine is transferred from CoA to a specific serine of apo-ACP by acpS. This modification is essential for activity because fatty acids are bound in thioester linkage to the sulfhydryl of the prosthetic group. As to expression, seed.

It localises to the plastid. The protein resides in the chloroplast. It participates in lipid metabolism; fatty acid biosynthesis. Functionally, carrier of the growing fatty acid chain in fatty acid biosynthesis. In Brassica napus (Rape), this protein is Acyl carrier protein, chloroplastic (ACL1.A1).